A 132-amino-acid polypeptide reads, in one-letter code: UPF0102 protein Acid_2433 (132 aa).

Belongs to the UPF0102 family.

The polypeptide is UPF0102 protein Acid_2433 (Solibacter usitatus (strain Ellin6076)).